The sequence spans 1615 residues: Low-density lipoprotein receptor-related protein 5 (1615 aa).

An N-terminal signal peptide occupies residues 1–31 (MEAAPPGPPWPLLLLLLLLLALCGCPAPAAA). The segment at 32–288 (SPLLLFANRR…YSPMDIQVLS (257 aa)) is beta-propeller 1. At 32–1384 (SPLLLFANRR…PPSDDSPAHS (1353 aa)) the chain is on the extracellular side. LDL-receptor class B repeat units follow at residues 75-119 (GAVY…DWVG), 120-162 (KKLY…DPAH), 163-206 (GYMY…DLEE), 207-247 (QKLY…TLSG), and 248-290 (DTLY…LSQE). The YWTD 1 repeat unit spans residues 78–81 (YWTD). Asn-93 is a glycosylation site (N-linked (GlcNAc...) asparagine). A YWTD 2 repeat occupies 123 to 126 (YWTD). N-linked (GlcNAc...) asparagine glycosylation occurs at Asn-138. A YWTD 3 repeat occupies 166–169 (YWTD). One copy of the YWTD 4 repeat lies at 251–254 (YWTD). The EGF-like 1 domain maps to 295–337 (FHTRCEEDNGGCSHLCLLSPSEPFYTCACPTGVQLQDNGRTCK). Disulfide bonds link Cys-299-Cys-310, Cys-306-Cys-321, and Cys-323-Cys-336. Positions 341–602 (EEVLLLARRT…AVNVAKVVGT (262 aa)) are beta-propeller 2. LDL-receptor class B repeat units follow at residues 385-427 (GYVY…DWVA), 428-470 (RNLY…HPVM), 471-514 (GLMY…DLQE), 515-557 (GKLY…LGDF), and 558-600 (IYWT…AKVV). 2 YWTD repeats span residues 388 to 391 (YWTD) and 431 to 434 (YWTD). Asn-446 carries an N-linked (GlcNAc...) asparagine glycan. The YWTD 7 repeat unit spans residues 474-477 (YWTD). N-linked (GlcNAc...) asparagine glycosylation is present at Asn-499. The YWTD 8 repeat unit spans residues 559-562 (YWTD). Residues 601-641 (GTNPCADRNGGCSHLCFFTPHATRCGCPIGLELLSDMKTCI) enclose the EGF-like 2 domain. Intrachain disulfides connect Cys-605–Cys-616, Cys-612–Cys-625, and Cys-627–Cys-640. The beta-propeller 3 stretch occupies residues 644–903 (EAFLVFTSRA…VFHSSRQDGL (260 aa)). 5 LDL-receptor class B repeats span residues 687–729 (NHIY…DWMG), 730–772 (KNLY…DPTK), 773–815 (GYIY…DYAD), 816–855 (QRLY…TQYS), and 856–898 (DYIY…FHSS). The YWTD 9 repeat unit spans residues 690–693 (YWTD). Asn-705 is a glycosylation site (N-linked (GlcNAc...) asparagine). 2 YWTD repeats span residues 819 to 822 (YWTD) and 859 to 862 (YWTD). Asn-878 carries N-linked (GlcNAc...) asparagine glycosylation. The region spanning 902-942 (GLNDCMHNNGQCGQLCLAIPGGHRCGCASHYTLDPSSRNCS) is the EGF-like 3 domain. 3 cysteine pairs are disulfide-bonded: Cys-906/Cys-917, Cys-913/Cys-926, and Cys-928/Cys-941. The tract at residues 945–1212 (TTFLLFSQKS…AVEEVSLEEF (268 aa)) is beta-propeller 4. LDL-receptor class B repeat units lie at residues 989–1035 (KFIY…DIYS), 1036–1078 (RTLF…NAER), 1079–1123 (GYLY…DNTL), 1124–1164 (GKLF…TILG), and 1165–1207 (KHLY…VEEV). In terms of domain architecture, EGF-like 4 spans 1213–1254 (SAHPCARDNGGCSHICIAKGDGTPRCSCPVHLVLLQNLLTCG). Intrachain disulfides connect Cys-1217–Cys-1228, Cys-1224–Cys-1238, Cys-1240–Cys-1253, Cys-1259–Cys-1273, Cys-1266–Cys-1286, Cys-1280–Cys-1295, Cys-1298–Cys-1310, Cys-1305–Cys-1323, Cys-1317–Cys-1332, Cys-1336–Cys-1348, Cys-1343–Cys-1361, and Cys-1355–Cys-1370. 3 LDL-receptor class A domains span residues 1258-1296 (TCSP…EGCP), 1297-1333 (VCSA…ADCD), and 1335-1371 (ICLP…LMCE). A helical transmembrane segment spans residues 1385–1407 (SAIGPVIGIILSLFVMGGVYFVC). The Cytoplasmic segment spans residues 1408–1615 (QRVVCQRYAG…PPPSPCTDSS (208 aa)). Residues 1475–1501 (RNHVTGASSSSSSSTKATLYPPILNPP) form a disordered region. The short motif at 1500 to 1506 (PPPSPAT) is the PPPSP motif A element. Residues 1538–1545 (PPTTPCST) carry the PPPSP motif B motif. The interval 1568-1615 (SDSDPYPPPPTPHSQYLSAEDSCPPSPATERSYFHLFPPPPSPCTDSS) is disordered. Residues 1574 to 1581 (PPPPTPHS) carry the PPPSP motif C motif. Residues 1591–1596 (PPSPAT) carry the PPPSP motif D motif. Residues 1604–1615 (FPPPPSPCTDSS) show a composition bias toward pro residues. The PPPSP motif E signature appears at 1605–1612 (PPPPSPCT).

This sequence belongs to the LDLR family. As to quaternary structure, homodimer; disulfide-linked. Forms phosphorylated oligomer aggregates on Wnt-signaling. Component of a Wnt-signaling complex that contains a WNT protein, a FZD protein and LRP5 or LRP6. Interacts with FZD8; the interaction is formed on WNT-binding and signaling. Interacts (via the phosphorylated PPPSP motif domains) with AXIN1; the interaction prevents inhibition of beta-catenin phosphorylation and signaling and is enhanced in the presence of GSK3B and WNT1 or WNT3A. Interacts (via beta-propeller regions 3 and 4) with DKK1; the interaction, enhanced by MESD and/or KREMEN, inhibits beta-catenin signaling by preventing GSK3-mediated phosphorylation of the PPPSP motifs and subsequent, AXIN1 binding. Interacts with MESD; the interaction prevents the formation of LRP5 aggregates, targets LRP5 to the plasma membrane and, when complexed with KREMEN2, increases DKK1 binding. Interacts with CSNK1E. Interacts with SOST; the interaction antagonizes canonical Wnt signaling. Interacts with APCDD1. Interacts with CAPRIN2. Phosphorylation of cytoplasmic PPPSP motifs regulates the signal transduction of the Wnt signaling pathway through acting as a docking site for AXIN1. In terms of tissue distribution, widely expressed, with the highest level of expression in the liver and in aorta.

The protein resides in the membrane. The protein localises to the endoplasmic reticulum. In terms of biological role, acts as a coreceptor with members of the frizzled family of seven-transmembrane spanning receptors to transduce signal by Wnt proteins. Activates the canonical Wnt signaling pathway that controls cell fate determination and self-renewal during embryonic development and adult tissue regeneration. In particular, may play an important role in the development of the posterior patterning of the epiblast during gastrulation. During bone development, regulates osteoblast proliferation and differentiation thus determining bone mass. Mechanistically, the formation of the signaling complex between Wnt ligand, frizzled receptor and LRP5 coreceptor promotes the recruitment of AXIN1 to LRP5, stabilizing beta-catenin/CTNNB1 and activating TCF/LEF-mediated transcriptional programs. Acts as a coreceptor for non-Wnt proteins, such as norrin/NDP. Binding of norrin/NDP to frizzled 4/FZD4-LRP5 receptor complex triggers beta-catenin/CTNNB1-dependent signaling known to be required for retinal vascular development. Plays a role in controlling postnatal vascular regression in retina via macrophage-induced endothelial cell apoptosis. This chain is Low-density lipoprotein receptor-related protein 5, found in Homo sapiens (Human).